Consider the following 405-residue polypeptide: Argininosuccinate synthase (405 aa).

Residues 10–18 (AYSGGLDTS) and alanine 37 each bind ATP. 2 residues coordinate L-citrulline: tyrosine 88 and serine 93. ATP is bound at residue glycine 118. Threonine 120, asparagine 124, and aspartate 125 together coordinate L-aspartate. Asparagine 124 contacts L-citrulline. The L-citrulline site is built by arginine 128, serine 179, serine 188, glutamate 264, and tyrosine 276.

The protein belongs to the argininosuccinate synthase family. Type 1 subfamily. In terms of assembly, homotetramer.

The protein resides in the cytoplasm. The enzyme catalyses L-citrulline + L-aspartate + ATP = 2-(N(omega)-L-arginino)succinate + AMP + diphosphate + H(+). It participates in amino-acid biosynthesis; L-arginine biosynthesis; L-arginine from L-ornithine and carbamoyl phosphate: step 2/3. The sequence is that of Argininosuccinate synthase from Pseudomonas syringae pv. syringae (strain B728a).